We begin with the raw amino-acid sequence, 399 residues long: Vitamin K-dependent protein Z (399 aa).

The N-terminal stretch at 1-22 is a signal peptide; the sequence is MAGCILLLRGFILTLILHQVEL. A propeptide spanning residues 23 to 40 is cleaved from the precursor; the sequence is SVFLPAPKANNVLRRWRR. One can recognise a Gla domain in the interval 41-86; sequence GSSYFLEEIFQGNLEKECYEEVCNYEEAREVFENDVITDEFWRQYG. 11 positions are modified to 4-carboxyglutamate: glutamate 47, glutamate 48, glutamate 55, glutamate 57, glutamate 60, glutamate 61, glutamate 66, glutamate 67, glutamate 70, glutamate 73, and glutamate 80. Cysteine 58 and cysteine 63 form a disulfide bridge. EGF-like domains follow at residues 87 to 123 and 125 to 166; these read GGSP…KTCA and AKNE…KSCG. 7 disulfide bridges follow: cysteine 91–cysteine 102, cysteine 96–cysteine 111, cysteine 113–cysteine 122, cysteine 129–cysteine 141, cysteine 137–cysteine 150, cysteine 152–cysteine 165, and cysteine 208–cysteine 224. N-linked (GlcNAc...) asparagine glycosylation is present at asparagine 99. Aspartate 104 bears the (3R)-3-hydroxyaspartate mark. The Peptidase S1 domain occupies 172–399; the sequence is ACGALTSEHI…YSMWFKQIMK (228 aa). 3 N-linked (GlcNAc...) asparagine glycosylation sites follow: asparagine 230, asparagine 305, and asparagine 331. Cysteine 326 and cysteine 340 are oxidised to a cystine.

The protein belongs to the peptidase S1 family. Post-translationally, the iron and 2-oxoglutarate dependent 3-hydroxylation of aspartate and asparagine is (R) stereospecific within EGF domains. Plasma.

The protein localises to the secreted. Appears to assist hemostasis by binding thrombin and promoting its association with phospholipid vesicles. Inhibits activity of the coagulation protease factor Xa in the presence of SERPINA10, calcium and phospholipids. The protein is Vitamin K-dependent protein Z (Proz) of Mus musculus (Mouse).